A 281-amino-acid polypeptide reads, in one-letter code: MRKVFKLNKVKVKELLKKVESEYRRDAEIILSYLLKVSPSQIPLMYAREIPEEIVKRFFKQMKERKKGIPTAYVIGEWECMGRVFKVKKGVLVPRPETEILIERTLELIPQDREMVGFELGSGTGCISINLLIERPKLVMYATDVNPDAVELTKENAKLHKVDDRLFVFLGNAFEPVKGMKFDFIVSNPPYIPENFWEILPEEVKKEGYTSLIGGKKGWEFYELIAEEGTKHLKENGFIALEIGHDQGKVVKELLEKKCFKVNIFKDYAGFDRVVIAQRWS.

S-adenosyl-L-methionine-binding positions include 121 to 125 (GSGTG), aspartate 144, and asparagine 188. 188-191 (NPPY) serves as a coordination point for substrate.

Belongs to the protein N5-glutamine methyltransferase family. PrmC subfamily.

The enzyme catalyses L-glutaminyl-[peptide chain release factor] + S-adenosyl-L-methionine = N(5)-methyl-L-glutaminyl-[peptide chain release factor] + S-adenosyl-L-homocysteine + H(+). Its function is as follows. Methylates the class 1 translation termination release factors RF1/PrfA and RF2/PrfB on the glutamine residue of the universally conserved GGQ motif. The polypeptide is Release factor glutamine methyltransferase (Aquifex aeolicus (strain VF5)).